Reading from the N-terminus, the 628-residue chain is Chaperone protein HtpG (628 aa).

Residues 1-337 (MSEKKYTFET…SADLPLNVSR (337 aa)) are a; substrate-binding. Residues 338-554 (EILQHNKVID…DYGMSLHMQK (217 aa)) are b. The segment at 555-628 (MMEEAGQGFM…FVKLVNKYIR (74 aa)) is c.

Belongs to the heat shock protein 90 family. In terms of assembly, homodimer.

Its subcellular location is the cytoplasm. Molecular chaperone. Has ATPase activity. This chain is Chaperone protein HtpG, found in Francisella tularensis subsp. novicida (strain U112).